We begin with the raw amino-acid sequence, 70 residues long: Sec-independent protein translocase protein TatA (70 aa).

A helical transmembrane segment spans residues 1–21; the sequence is MGIGVWELLLLFLIVLVVFGT. The disordered stretch occupies residues 42–70; that stretch reads MSENEDKPSEGGARTLEGEVVDKKEKDKV. The segment covering 57 to 70 has biased composition (basic and acidic residues); that stretch reads LEGEVVDKKEKDKV.

It belongs to the TatA/E family. The Tat system comprises two distinct complexes: a TatABC complex, containing multiple copies of TatA, TatB and TatC subunits, and a separate TatA complex, containing only TatA subunits. Substrates initially bind to the TatABC complex, which probably triggers association of the separate TatA complex to form the active translocon.

It localises to the cell inner membrane. Functionally, part of the twin-arginine translocation (Tat) system that transports large folded proteins containing a characteristic twin-arginine motif in their signal peptide across membranes. TatA could form the protein-conducting channel of the Tat system. The chain is Sec-independent protein translocase protein TatA from Methylococcus capsulatus (strain ATCC 33009 / NCIMB 11132 / Bath).